The primary structure comprises 545 residues: Carboxypeptidase Y homolog A (545 aa).

A signal peptide spans 1–18; the sequence is MKSSLALALLVGGAIASG. Positions 19–125 are excised as a propeptide; sequence PQQQVLREPV…RLDTYDLRVK (107 aa). Cystine bridges form between C179–C418, C313–C327, C337–C360, C344–C353, and C382–C388. N-linked (GlcNAc...) asparagine glycosylation occurs at N210. The active site involves S266. The active site involves D457. N487 and N507 each carry an N-linked (GlcNAc...) asparagine glycan. H518 is a catalytic residue.

It belongs to the peptidase S10 family.

It localises to the vacuole. The enzyme catalyses Release of a C-terminal amino acid with broad specificity.. Vacuolar carboxypeptidase involved in degradation of small peptides. Digests preferentially peptides containing an aliphatic or hydrophobic residue in P1' position, as well as methionine, leucine or phenylalanine in P1 position of ester substrate. In Ajellomyces capsulatus (strain NAm1 / WU24) (Darling's disease fungus), this protein is Carboxypeptidase Y homolog A (CPYA).